The primary structure comprises 474 residues: Shufflon protein A (474 aa).

Residues 1–361 form a constant region region; it reads MKKYDRGWAS…TGAILSCQSG (361 aa). A variable region region spans residues 362–474; the sequence is TWKTSGSLNG…GVFSVFGYQT (113 aa).

The sequence is that of Shufflon protein A from Escherichia coli.